Reading from the N-terminus, the 856-residue chain is Rab effector MyRIP (856 aa).

The RabBD domain maps to 4 to 124 (KLDLSGLTDD…TQSLEWFYNN (121 aa)). An FYVE-type zinc finger spans residues 63–105 (CCMRCCSPFTFLVNARRRCGECKFSVCKSCCSYQKHEKLWVCC). The segment at 143 to 560 (KKHRLESGAC…AQVSDNVSET (418 aa)) is myosin-binding. The interval 193–209 (VALQVAEEAIEEAISKA) is PKA-binding. Residues 232–248 (LAEELAGTILQRIIRKQ) form a negative regulation of PKA-binding region. The segment at 251–287 (KADLHAEEEEPECTRPQSSGVKARGEGTAAPPGRHKA) is disordered. S299 is subject to Phosphoserine. Residues 302–311 (TEDTLKTSSA) are compositionally biased toward polar residues. 6 disordered regions span residues 302-323 (TEDTLKTSSAEAAPRQPKDRAQ), 350-376 (QSPDGNWMTLKDSSRQPPTRLLAKPKS), 392-578 (YDEL…SAEE), 592-625 (SEKETSSGEDQESESKTEPKNQKGSLSSEENNQG), 778-805 (RRDQKQRSQVQTIDTSRQQRRKLPAPPV), and 826-845 (LLQGSSTNRPTASTSNTKDL). A Phosphoserine modification is found at S351. Over residues 395–405 (LGSDSEEDFDY) the composition is skewed to acidic residues. 2 stretches are compositionally biased toward low complexity: residues 427–437 (PAQAQSSGQGP) and 450–460 (SDSETSSTSSS). The segment at 495–856 (FNPQAAGGET…EPVLESAVMY (362 aa)) is actin-binding. Composition is skewed to polar residues over residues 551 to 574 (AQVSDNVSETDISNEAQNSRSSTD), 613 to 625 (QKGSLSSEENNQG), 784 to 793 (RSQVQTIDTS), and 826 to 843 (LLQGSSTNRPTASTSNTK).

As to quaternary structure, binds MYO5A, MYO7A and F-actin. Binds RAB27A that has been activated by GTP-binding via its N-terminus. Interacts with PRKAR2A. Interacts with components of the exocyst complex, including EXOC3 and EXOC4.

The protein resides in the cytoplasm. Its subcellular location is the perinuclear region. The protein localises to the cytoplasmic vesicle. It localises to the secretory vesicle. It is found in the melanosome. Rab effector protein involved in melanosome transport. Serves as link between melanosome-bound RAB27A and the motor proteins MYO5A and MYO7A. May link RAB27A-containing vesicles to actin filaments. Functions as a protein kinase A-anchoring protein (AKAP). May act as a scaffolding protein that links PKA to components of the exocytosis machinery, thus facilitating exocytosis, including insulin release. The protein is Rab effector MyRIP (Myrip) of Rattus norvegicus (Rat).